The following is a 616-amino-acid chain: Chaperone protein HscA (616 aa).

It belongs to the heat shock protein 70 family.

In terms of biological role, chaperone involved in the maturation of iron-sulfur cluster-containing proteins. Has a low intrinsic ATPase activity which is markedly stimulated by HscB. Involved in the maturation of IscU. This chain is Chaperone protein HscA, found in Escherichia coli O139:H28 (strain E24377A / ETEC).